Here is a 319-residue protein sequence, read N- to C-terminus: Acetyl esterase (319 aa).

The Involved in the stabilization of the negatively charged intermediate by the formation of the oxyanion hole motif lies at H91–G93. Residues S165, D262, and H292 contribute to the active site.

Belongs to the 'GDXG' lipolytic enzyme family. In terms of assembly, homodimer. Interacts with MalT and MelA.

The protein localises to the cytoplasm. Displays esterase activity towards short chain fatty esters (acyl chain length of up to 8 carbons). Able to hydrolyze triacetylglycerol (triacetin) and tributyrylglycerol (tributyrin), but not trioleylglycerol (triolein) or cholesterol oleate. Negatively regulates MalT activity by antagonizing maltotriose binding. Inhibits MelA galactosidase activity. This is Acetyl esterase from Shigella boydii serotype 18 (strain CDC 3083-94 / BS512).